The sequence spans 234 residues: Thymidylate kinase (234 aa).

An ATP-binding site is contributed by 20-27; it reads GIDASGKT.

This sequence belongs to the thymidylate kinase family.

The catalysed reaction is dTMP + ATP = dTDP + ADP. In terms of biological role, phosphorylation of dTMP to form dTDP in both de novo and salvage pathways of dTTP synthesis. This Mycoplasmopsis pulmonis (strain UAB CTIP) (Mycoplasma pulmonis) protein is Thymidylate kinase.